Consider the following 284-residue polypeptide: MSALSIISIIIGWIYFACWSLSFYPQVILNFRKKNVIGLSFDFLLFNITGYACYSVFNSVLYFDKLVKNEYYDKYGPPIPVQQSDIAFAIHGFVLTAITIIQCFIYDRGNQKNSKLGIGIATLIWVSLIVMTILGFSNVFTWLWVINYYSYVKLFITFIKYIPQAYLNFKNKSTSGWSVHNVLLDFSGGVLSLLQMFLDVADSGNWNIFTGDPVKLGLSLFSIAFDILFIIQHYILYRNPKSKGYQNLNDNNIPNNNNNNNNNINNNTPHQIIINNSLIGEEDQ.

Helical transmembrane passes span 3 to 23 (ALSI…SLSF), 37 to 57 (IGLS…YSVF), 86 to 106 (IAFA…CFIY), 116 to 136 (LGIG…ILGF), 139 to 159 (VFTW…ITFI), 181 to 201 (NVLL…LDVA), and 216 to 236 (LGLS…HYIL). The region spanning 4-70 (LSIISIIIGW…LYFDKLVKNE (67 aa)) is the PQ-loop 1 domain. The PQ-loop 2 domain occupies 154 to 208 (LFITFIKYIPQAYLNFKNKSTSGWSVHNVLLDFSGGVLSLLQMFLDVADSGNWNI). The disordered stretch occupies residues 247–269 (NLNDNNIPNNNNNNNNNINNNTP).

Belongs to the cystinosin family.

The protein localises to the lysosome membrane. It catalyses the reaction L-cystine(out) + H(+)(out) = L-cystine(in) + H(+)(in). Functionally, cystine/H(+) symporter that mediates export of cystine, the oxidized dimer of cysteine, from lysosomes. This Dictyostelium discoideum (Social amoeba) protein is Cystinosin homolog (ctns).